A 373-amino-acid chain; its full sequence is Secondary metabolism regulator laeA (373 aa).

Disordered stretches follow at residues 1–21 (MFLN…PLNV) and 53–81 (AAER…NPDR). Polar residues predominate over residues 67 to 77 (GSPSINSTSSK).

It belongs to the methyltransferase superfamily. LaeA methyltransferase family. As to quaternary structure, component of the heterotrimeric velvet complex composed of laeA, veA and velB; VeA acting as a bridging protein between laeA and velB.

The protein localises to the nucleus. The catalysed reaction is L-methionyl-[protein] + S-adenosyl-L-methionine = S-methyl-L-methionyl-[protein] + S-adenosyl-L-homocysteine. Its function is as follows. Methyltransferase that performs automethylation. No other methyl-accepting substrate has been identified yet. Component of the velvet transcription factor complex that acts as a global regulator for secondary metabolite gene expression. Controls the expression of the cyclopiazonic acid (CPA) gene clusters. Regulates also pigmentation and conidial head morphology. This chain is Secondary metabolism regulator laeA, found in Aspergillus fumisynnematus.